The primary structure comprises 187 residues: Large ribosomal subunit protein eL18x (187 aa).

Positions His150–Val187 are disordered. Residues Tyr165–Val187 are compositionally biased toward basic residues.

This sequence belongs to the eukaryotic ribosomal protein eL18 family.

This chain is Large ribosomal subunit protein eL18x (RPL18C), found in Arabidopsis thaliana (Mouse-ear cress).